The sequence spans 91 residues: MVLSNVVRVVNRLNSAGTRSGLMGIRQLRRKYTYRSGALKPMPNVIPFGLLGVVLTVIPGLLIGATISKNMANFLEENDLFVPSDDDDDDD.

Residues 45–65 (VIPFGLLGVVLTVIPGLLIGA) traverse the membrane as a helical segment.

The protein belongs to the SMDT1/EMRE family.

Its subcellular location is the mitochondrion inner membrane. Functionally, essential regulatory subunit of the mitochondrial calcium uniporter (mcu) channel, a protein that mediates calcium uptake into mitochondria. In Aedes aegypti (Yellowfever mosquito), this protein is Essential MCU regulator, mitochondrial.